An 86-amino-acid chain; its full sequence is Apolipoprotein C-I (86 aa).

Residues 1–26 (MRLFLSLPVLVVVLLMILEGPGPAQG) form the signal peptide.

It belongs to the apolipoprotein C1 family.

The protein resides in the secreted. Functionally, inhibitor of lipoprotein binding to the low density lipoprotein (LDL) receptor, LDL receptor-related protein, and very low density lipoprotein (VLDL) receptor. Associates with high density lipoproteins (HDL) and the triacylglycerol-rich lipoproteins in the plasma and makes up about 10% of the protein of the VLDL and 2% of that of HDL. Appears to interfere directly with fatty acid uptake and is also the major plasma inhibitor of cholesteryl ester transfer protein (CETP). Binds free fatty acids and reduces their intracellular esterification. Modulates the interaction of APOE with beta-migrating VLDL and inhibits binding of beta-VLDL to the LDL receptor-related protein. The sequence is that of Apolipoprotein C-I (APOC1) from Saimiri boliviensis boliviensis (Bolivian squirrel monkey).